Consider the following 332-residue polypeptide: ADP-L-glycero-D-manno-heptose-6-epimerase (332 aa).

Residues 10 to 11 (FI), 31 to 32 (DD), K38, 74 to 78 (QGACS), and N91 each bind NADP(+). The Proton acceptor role is filled by Y138. K142 serves as a coordination point for NADP(+). Residue N167 participates in substrate binding. NADP(+)-binding residues include V168 and K176. The active-site Proton acceptor is K176. Residues R178, H185, 199-202 (FSGW), R212, and Y291 contribute to the substrate site.

Belongs to the NAD(P)-dependent epimerase/dehydratase family. HldD subfamily. As to quaternary structure, homopentamer. Requires NADP(+) as cofactor.

It carries out the reaction ADP-D-glycero-beta-D-manno-heptose = ADP-L-glycero-beta-D-manno-heptose. It functions in the pathway nucleotide-sugar biosynthesis; ADP-L-glycero-beta-D-manno-heptose biosynthesis; ADP-L-glycero-beta-D-manno-heptose from D-glycero-beta-D-manno-heptose 7-phosphate: step 4/4. Functionally, catalyzes the interconversion between ADP-D-glycero-beta-D-manno-heptose and ADP-L-glycero-beta-D-manno-heptose via an epimerization at carbon 6 of the heptose. The polypeptide is ADP-L-glycero-D-manno-heptose-6-epimerase (Bordetella avium (strain 197N)).